We begin with the raw amino-acid sequence, 284 residues long: Nucleotide-binding protein NMCC_0698 (284 aa).

An ATP-binding site is contributed by 8–15 (GLSGSGKS). Residue 58–61 (DVRS) coordinates GTP.

Belongs to the RapZ-like family.

In terms of biological role, displays ATPase and GTPase activities. The polypeptide is Nucleotide-binding protein NMCC_0698 (Neisseria meningitidis serogroup C (strain 053442)).